Consider the following 555-residue polypeptide: Potassium-transporting ATPase potassium-binding subunit (555 aa).

Transmembrane regions (helical) follow at residues 2–22 (IWVAVVITMLLFILVAKPTGI), 60–80 (QYALSLVLLNGFMIVVVYFIF), 130–150 (IGITFLMFAAPATTLAIVMAF), 173–193 (VFLPIAFIAALVFVALGVPQT), 246–266 (MSNILQMMLMMLLPTALPFTY), 278–298 (ILFVSLFMVFLLGFITITTSE), 374–394 (AGFVNIIMYAIIAVFISGLMV), 412–432 (LIAVTILFHPLLILGFSALAL), 483–503 (LVMFLGRYFSLITMLAVAASL), and 525–545 (GIFIGTIVIVGALTFFPMLVL).

It belongs to the KdpA family. As to quaternary structure, the system is composed of three essential subunits: KdpA, KdpB and KdpC.

The protein resides in the cell membrane. Its function is as follows. Part of the high-affinity ATP-driven potassium transport (or Kdp) system, which catalyzes the hydrolysis of ATP coupled with the electrogenic transport of potassium into the cytoplasm. This subunit binds the extracellular potassium ions and delivers the ions to the membrane domain of KdpB through an intramembrane tunnel. In Bacillus mycoides (strain KBAB4) (Bacillus weihenstephanensis), this protein is Potassium-transporting ATPase potassium-binding subunit.